The chain runs to 383 residues: Succinyl-diaminopimelate desuccinylase (383 aa).

Position 74 (H74) interacts with Zn(2+). The active site involves D76. Zn(2+) is bound at residue D107. Residue E141 is the Proton acceptor of the active site. Residues E142, E170, and H356 each coordinate Zn(2+).

It belongs to the peptidase M20A family. DapE subfamily. In terms of assembly, homodimer. The cofactor is Zn(2+). Co(2+) serves as cofactor.

The catalysed reaction is N-succinyl-(2S,6S)-2,6-diaminopimelate + H2O = (2S,6S)-2,6-diaminopimelate + succinate. It functions in the pathway amino-acid biosynthesis; L-lysine biosynthesis via DAP pathway; LL-2,6-diaminopimelate from (S)-tetrahydrodipicolinate (succinylase route): step 3/3. Its function is as follows. Catalyzes the hydrolysis of N-succinyl-L,L-diaminopimelic acid (SDAP), forming succinate and LL-2,6-diaminopimelate (DAP), an intermediate involved in the bacterial biosynthesis of lysine and meso-diaminopimelic acid, an essential component of bacterial cell walls. The sequence is that of Succinyl-diaminopimelate desuccinylase from Cupriavidus pinatubonensis (strain JMP 134 / LMG 1197) (Cupriavidus necator (strain JMP 134)).